The sequence spans 57 residues: MSRLYAIILIALVFNVVMTITPDMKVEAATCEDCPEHCATQNARAKCDNDKCVCEPK.

A signal peptide spans 1–28; the sequence is MSRLYAIILIALVFNVVMTITPDMKVEA. Intrachain disulfides connect cysteine 31–cysteine 47, cysteine 34–cysteine 52, and cysteine 38–cysteine 54.

It belongs to the short scorpion toxin superfamily. Potassium channel inhibitor family. Alpha-KTx 08 subfamily. As to expression, expressed by the venom gland.

It is found in the secreted. In terms of biological role, this toxin inhibits rKv1.1/KCNA1 (100% inhibition at 3 uM), Kv1.3/KCNA3 (human, mouse and rat) (IC(50)=269-467 nM), shaker IR (60% at 3 uM) and activates the mouse capsaicin receptor TRPV1 (EC(50)=132 uM, at 20 degrees Celsius), a non-selective cation channel expressed by sensory neurons of the pain pathway. In vivo, intraplantar injection of this toxin in WT mice hind paw shows significant acute pain, whereas no pain is observed when the toxin is injected into TRPV1 KO mice. In addition, subcutaneous injection into mice (185 mg) produces an excitation of the animal, but no lethality, whereas injection into cockroaches does not provoke lethality as well. This is Potassium channel toxin alpha-KTx 8.2 from Olivierus martensii (Manchurian scorpion).